A 393-amino-acid polypeptide reads, in one-letter code: Probable acetyl-CoA acyltransferase (393 aa).

Cysteine 88 (acyl-thioester intermediate) is an active-site residue. Catalysis depends on proton acceptor residues histidine 349 and cysteine 378.

This sequence belongs to the thiolase-like superfamily. Thiolase family.

The protein localises to the cytoplasm. It catalyses the reaction 2 acetyl-CoA = acetoacetyl-CoA + CoA. In Staphylococcus aureus (strain NCTC 8325 / PS 47), this protein is Probable acetyl-CoA acyltransferase.